The sequence spans 373 residues: Lipoyl amidotransferase LIPT1, mitochondrial (373 aa).

Residues 1–25 (MLIPFSMKNCFQLLCNLKVPAAGFK) constitute a mitochondrion transit peptide. The 187-residue stretch at 57–243 (LEGKPVLFLW…EYATSHQIDN (187 aa)) folds into the BPL/LPL catalytic domain. (R)-lipoyl-5'-AMP contacts are provided by Y107, R151, K161, T179, T208, and A210.

The protein belongs to the LplA family.

The protein localises to the mitochondrion. The enzyme catalyses N(6)-[(R)-lipoyl]-L-lysyl-[glycine-cleavage complex H protein] + L-lysyl-[lipoyl-carrier protein] = L-lysyl-[glycine-cleavage complex H protein] + N(6)-[(R)-lipoyl]-L-lysyl-[lipoyl-carrier protein]. The catalysed reaction is (R)-lipoyl-5'-AMP + L-lysyl-[lipoyl-carrier protein] = N(6)-[(R)-lipoyl]-L-lysyl-[lipoyl-carrier protein] + AMP + 2 H(+). The protein operates within protein modification; protein lipoylation via exogenous pathway; protein N(6)-(lipoyl)lysine from lipoate: step 2/2. With respect to regulation, inhibited by lipoyl-AMP analogs including hexanoyl-, octanoyl- and decanoyl-AMP. In terms of biological role, lipoyl amidotransferase that catalyzes the transfer of lipoyl moieties from lipoyl-protein H of the glycine cleavage system (lipoyl-GCSH) to E2 subunits of the pyruvate dehydrogenase complex (PDCE2). Unable to catalyze the transfer of octanoyl from octanoyl-GCSH to PDCE2. In vitro, it is also able to catalyze the transfer of the lipoyl group from lipoyl-AMP to the specific lysine residue of lipoyl domains of lipoate-dependent enzymes but this reaction may not be physiologically relevant. This chain is Lipoyl amidotransferase LIPT1, mitochondrial (LIPT1), found in Bos taurus (Bovine).